Reading from the N-terminus, the 211-residue chain is Large ribosomal subunit protein eL13 (211 aa).

The residue at position 16 (lysine 16) is an N6-acetyllysine. Serine 77 and serine 106 each carry phosphoserine. Glycyl lysine isopeptide (Lys-Gly) (interchain with G-Cter in SUMO2) cross-links involve residues lysine 123 and lysine 145. Lysine 174 is covalently cross-linked (Glycyl lysine isopeptide (Lys-Gly) (interchain with G-Cter in SUMO1); alternate). Residues lysine 174 and lysine 177 each participate in a glycyl lysine isopeptide (Lys-Gly) (interchain with G-Cter in SUMO2); alternate cross-link. Lysine 177 carries the post-translational modification N6-acetyllysine; alternate.

This sequence belongs to the eukaryotic ribosomal protein eL13 family. In terms of assembly, component of the 60S large ribosomal subunit (LSU).

It localises to the cytoplasm. Functionally, component of the ribosome, a large ribonucleoprotein complex responsible for the synthesis of proteins in the cell. The small ribosomal subunit (SSU) binds messenger RNAs (mRNAs) and translates the encoded message by selecting cognate aminoacyl-transfer RNA (tRNA) molecules. The large subunit (LSU) contains the ribosomal catalytic site termed the peptidyl transferase center (PTC), which catalyzes the formation of peptide bonds, thereby polymerizing the amino acids delivered by tRNAs into a polypeptide chain. The nascent polypeptides leave the ribosome through a tunnel in the LSU and interact with protein factors that function in enzymatic processing, targeting, and the membrane insertion of nascent chains at the exit of the ribosomal tunnel. As part of the LSU, it is probably required for its formation and the maturation of rRNAs. Plays a role in bone development. This chain is Large ribosomal subunit protein eL13 (RPL13), found in Oryctolagus cuniculus (Rabbit).